Consider the following 496-residue polypeptide: Glycerol kinase (496 aa).

An ADP-binding site is contributed by Thr-11. ATP-binding residues include Thr-11, Thr-12, and Ser-13. Thr-11 lines the sn-glycerol 3-phosphate pocket. ADP is bound at residue Arg-15. Residues Arg-81, Glu-82, Tyr-133, and Asp-242 each coordinate sn-glycerol 3-phosphate. The glycerol site is built by Arg-81, Glu-82, Tyr-133, Asp-242, and Gln-243. ADP is bound by residues Thr-264 and Gly-307. 4 residues coordinate ATP: Thr-264, Gly-307, Gln-311, and Gly-408. Positions 408 and 412 each coordinate ADP.

Belongs to the FGGY kinase family.

The enzyme catalyses glycerol + ATP = sn-glycerol 3-phosphate + ADP + H(+). The protein operates within polyol metabolism; glycerol degradation via glycerol kinase pathway; sn-glycerol 3-phosphate from glycerol: step 1/1. Inhibited by fructose 1,6-bisphosphate (FBP). Its function is as follows. Key enzyme in the regulation of glycerol uptake and metabolism. Catalyzes the phosphorylation of glycerol to yield sn-glycerol 3-phosphate. This chain is Glycerol kinase, found in Trichlorobacter lovleyi (strain ATCC BAA-1151 / DSM 17278 / SZ) (Geobacter lovleyi).